A 94-amino-acid chain; its full sequence is Na(+)/H(+) antiporter subunit F (94 aa).

3 consecutive transmembrane segments (helical) span residues 2–22 (FTLI…LYVI), 34–54 (VVAL…VSIL), and 59–79 (AFLD…IAFS).

The protein belongs to the CPA3 antiporters (TC 2.A.63) subunit F family. In terms of assembly, forms a heterooligomeric complex that consists of seven subunits: MrpA, MrpB, MrpC, MrpD, MrpE, MrpF and MrpG.

It is found in the cell membrane. Functionally, mrp complex is a Na(+)/H(+) antiporter that is considered to be the major Na(+) excretion system in B.subtilis. Has a major role in Na(+) resistance and a minor role in Na(+)- and K(+)-dependent pH homeostasis as compared to TetB. MrpA may be the actual Na(+)/H(+) antiporter, although the six other Mrp proteins are all required for Na(+)/H(+) antiport activity and Na(+) resistance. MrpA is required for initiation of sporulation when external Na(+) concentration increases. Also transports Li(+) but not K(+), Ca(2+) or Mg(2+). In terms of biological role, involved in cholate and Na(+) efflux activities, which may be mechanistically coupled. Does not require other Mrp proteins for its own function. This chain is Na(+)/H(+) antiporter subunit F (mrpF), found in Bacillus subtilis (strain 168).